The chain runs to 548 residues: Synaptic vesicle 2-related protein (548 aa).

The Cytoplasmic segment spans residues 1-87 (MEEDLFQLRQ…GFGKFQWKLS (87 aa)). Phosphoserine is present on residues S25 and S31. Residues 88 to 108 (VLTGLAWMADAMEMMILSILA) form a helical membrane-spanning segment. The Vesicular portion of the chain corresponds to 109 to 122 (PQLHCEWRLPSWQV). The helical transmembrane segment at 123–143 (ALLTSVVFVGMMSSSTLWGNI) threads the bilayer. Topologically, residues 144–156 (SDQYGRKTGLKIS) are cytoplasmic. A helical membrane pass occupies residues 157 to 177 (VLWTLYYGILSAFAPVYSWIL). Over 178–180 (VLR) the chain is Vesicular. Residues 181–201 (GLVGFGIGGVPQSVTLYAEFL) traverse the membrane as a helical segment. Over 202–209 (PMKARAKC) the chain is Cytoplasmic. A helical membrane pass occupies residues 210–230 (ILLIEVFWAIGTVFEVVLAVF). Residues 231 to 238 (VMPSLGWR) are Vesicular-facing. Residues 239–259 (WLLILSAVPLLLFAVLCFWLP) traverse the membrane as a helical segment. Residues 260 to 316 (ESARYDVLSGNQEKAIATLKRIATENGAPMPLGKLIISRQEDRGKMRDLFTPHFRWT) are Cytoplasmic-facing. Residues 317–337 (TLLLWFIWFSNAFSYYGLVLL) form a helical membrane-spanning segment. The Vesicular portion of the chain corresponds to 338 to 373 (TTELFQAGDVCSISSRKKAVEAKCSLACEYLSEEDY). A helical transmembrane segment spans residues 374–394 (MDLLWTTLSEFPGVLVTLWII). Residues 395-401 (DRLGRKK) lie on the Cytoplasmic side of the membrane. Residues 402–422 (TMALCFVVFSFCSLLLFICVG) form a helical membrane-spanning segment. The Vesicular portion of the chain corresponds to 423–425 (RNM). A helical membrane pass occupies residues 426-446 (LTLLLFIARAFISGGFQAAYV). The Cytoplasmic portion of the chain corresponds to 447 to 457 (YTPEVYPTATR). A helical transmembrane segment spans residues 458–478 (ALGLGTCSGMARVGALITPFI). The Vesicular portion of the chain corresponds to 479–489 (AQVMLESSVYL). A helical membrane pass occupies residues 490–510 (TLAVYSGCCLLAALASCFLPI). Residues 511–548 (ETKGRGLQESSHREWGQEMVGRGAHGTGVARSNSGSQE) lie on the Cytoplasmic side of the membrane. Residues 528 to 548 (EMVGRGAHGTGVARSNSGSQE) are disordered. S542 carries the post-translational modification Phosphoserine.

It belongs to the major facilitator superfamily. In terms of tissue distribution, detected in brain and adrenal medulla.

Its subcellular location is the cytoplasmic vesicle. The protein localises to the secretory vesicle. It localises to the synaptic vesicle membrane. This Bos taurus (Bovine) protein is Synaptic vesicle 2-related protein (SVOP).